A 569-amino-acid polypeptide reads, in one-letter code: Urease subunit alpha (569 aa).

A Urease domain is found at 131-569 (GSIDTHIHFI…VPMAQRYFLL (439 aa)). Ni(2+) contacts are provided by His-136, His-138, and Lys-219. The residue at position 219 (Lys-219) is an N6-carboxylysine. His-221 provides a ligand contact to substrate. Ni(2+) contacts are provided by His-248 and His-274. The active-site Proton donor is the His-322. Asp-362 is a binding site for Ni(2+).

Belongs to the metallo-dependent hydrolases superfamily. Urease alpha subunit family. In terms of assembly, heterotrimer of UreA (gamma), UreB (beta) and UreC (alpha) subunits. Three heterotrimers associate to form the active enzyme. Requires Ni cation as cofactor. Post-translationally, carboxylation allows a single lysine to coordinate two nickel ions.

The protein resides in the cytoplasm. The catalysed reaction is urea + 2 H2O + H(+) = hydrogencarbonate + 2 NH4(+). The protein operates within nitrogen metabolism; urea degradation; CO(2) and NH(3) from urea (urease route): step 1/1. This Prochlorococcus marinus (strain AS9601) protein is Urease subunit alpha.